Consider the following 145-residue polypeptide: uncharacterized protein (145 aa).

The disordered stretch occupies residues 1–49; it reads MLSIFKNLLGTSEEDGTTQEANSKDTKGLKEERKRKKRKNKYKIPPGHT. The segment covering 22 to 32 has biased composition (basic and acidic residues); the sequence is NSKDTKGLKEE. The segment covering 33–42 has biased composition (basic residues); the sequence is RKRKKRKNKY. Ser68 bears the Phosphoserine mark. The 77-residue stretch at 69–145 folds into the Cytochrome b5 heme-binding domain; the sequence is PISVTAEELA…LKTSFVGYLV (77 aa). Positions 104 and 127 each coordinate heme.

It belongs to the cytochrome b5 family.

It is found in the cytoplasm. This is an uncharacterized protein from Schizosaccharomyces pombe (strain 972 / ATCC 24843) (Fission yeast).